Here is a 357-residue protein sequence, read N- to C-terminus: Heme A synthase (357 aa).

5 consecutive transmembrane segments (helical) span residues 24–44 (LVRYWLYAVFVVLIAIVMVGG), 110–130 (MLARFVGFLVAVPLAFFWVTG), 140–160 (MLGLLALGGLQGAIGWWMVAS), 175–195 (IHLTTACIIITAVFYIARGLV), and 209–229 (FAGWIVFAVLVQIYLGGLVAG). His-272 is a binding site for heme. A run of 3 helical transmembrane segments spans residues 274 to 294 (MFAYTVLVLTVLHSLQVWKQV), 303 to 323 (TIVLVGLVLIQAVIGIATLLM), and 325 to 345 (VPLHLGLTHQFFALIVLAFAV). His-333 is a binding site for heme.

It belongs to the COX15/CtaA family. Type 2 subfamily. Interacts with CtaB. Heme b serves as cofactor.

Its subcellular location is the cell membrane. It catalyses the reaction Fe(II)-heme o + 2 A + H2O = Fe(II)-heme a + 2 AH2. Its pathway is porphyrin-containing compound metabolism; heme A biosynthesis; heme A from heme O: step 1/1. Its function is as follows. Catalyzes the conversion of heme O to heme A by two successive hydroxylations of the methyl group at C8. The first hydroxylation forms heme I, the second hydroxylation results in an unstable dihydroxymethyl group, which spontaneously dehydrates, resulting in the formyl group of heme A. This is Heme A synthase from Brucella anthropi (strain ATCC 49188 / DSM 6882 / CCUG 24695 / JCM 21032 / LMG 3331 / NBRC 15819 / NCTC 12168 / Alc 37) (Ochrobactrum anthropi).